Here is a 146-residue protein sequence, read N- to C-terminus: Large ribosomal subunit protein uL15 (146 aa).

The span at 1-10 shows a compositional bias: basic and acidic residues; that stretch reads MKLHELKPAE. The interval 1-51 is disordered; that stretch reads MKLHELKPAEGSRQVRNRVGRGTSSGNGKTAGRGQKGQKARSGGGVRLGFE. 2 stretches are compositionally biased toward gly residues: residues 23–35 and 42–51; these read TSSG…GRGQ and SGGGVRLGFE.

This sequence belongs to the universal ribosomal protein uL15 family. In terms of assembly, part of the 50S ribosomal subunit.

Functionally, binds to the 23S rRNA. The protein is Large ribosomal subunit protein uL15 of Enterococcus faecalis (strain ATCC 700802 / V583).